A 1208-amino-acid polypeptide reads, in one-letter code: ATP-dependent DNA helicase Q4 (1208 aa).

Disordered stretches follow at residues A17 to S180 and F201 to A333. S27 is subject to Phosphoserine. Residues E36 to T47 are compositionally biased toward basic and acidic residues. Residues S61 to E70 show a composition bias toward low complexity. Over residues A86–G100 the composition is skewed to polar residues. Phosphoserine is present on residues S178 and S180. Residues A273 to G283 are compositionally biased toward polar residues. Residues V489–P662 form the Helicase ATP-binding domain. L502–S509 serves as a coordination point for ATP. The DEAH box motif lies at D605 to H608. A Helicase C-terminal domain is found at D683 to F850. Residues C853 and C855 each contribute to the Zn(2+) site. The tract at residues P860 to Q888 is disordered. Zn(2+) contacts are provided by C897 and H900. Residues E1111–A1130 form a disordered region. Positions G1117–R1208 are increases helicase activity about 5-fold (in a fragment starting at residue 427).

The protein belongs to the helicase family. RecQ subfamily. Interacts with UBR1 and UBR2. Interacts with MCM10; this interaction regulates RECQL4 unwinding activity. Interacts (via residues 1-54) with TOPBP1. It depends on Zn(2+) as a cofactor. As to expression, ubiquitously expressed, with highest levels in thymus and testis.

The protein localises to the cytoplasm. Its subcellular location is the nucleus. It catalyses the reaction Couples ATP hydrolysis with the unwinding of duplex DNA by translocating in the 3'-5' direction.. The enzyme catalyses ATP + H2O = ADP + phosphate + H(+). An ATP-dependent DNA helicase which unwinds dsDNA with a 3'-overhang in a 3'-5' direction. Does not unwind more than 18 bp of dsDNA. May modulate chromosome segregation. The N-terminal domain (residues 1-54) binds DNA Y-shaped DNA better than ss- or dsDNA. The core helicase domain binds ssDNA. The chain is ATP-dependent DNA helicase Q4 (RECQL4) from Homo sapiens (Human).